We begin with the raw amino-acid sequence, 356 residues long: S-adenosylmethionine:tRNA ribosyltransferase-isomerase (356 aa).

It belongs to the QueA family. As to quaternary structure, monomer.

The protein localises to the cytoplasm. The catalysed reaction is 7-aminomethyl-7-carbaguanosine(34) in tRNA + S-adenosyl-L-methionine = epoxyqueuosine(34) in tRNA + adenine + L-methionine + 2 H(+). It functions in the pathway tRNA modification; tRNA-queuosine biosynthesis. Functionally, transfers and isomerizes the ribose moiety from AdoMet to the 7-aminomethyl group of 7-deazaguanine (preQ1-tRNA) to give epoxyqueuosine (oQ-tRNA). This chain is S-adenosylmethionine:tRNA ribosyltransferase-isomerase, found in Xanthomonas campestris pv. campestris (strain B100).